The chain runs to 167 residues: Glucose-6-phosphate isomerase (167 aa).

Catalysis depends on Glu54, which acts as the Proton donor. Residue His85 is part of the active site.

It belongs to the GPI family.

Its subcellular location is the cytoplasm. It catalyses the reaction alpha-D-glucose 6-phosphate = beta-D-fructose 6-phosphate. The protein operates within carbohydrate biosynthesis; gluconeogenesis. It functions in the pathway carbohydrate degradation; glycolysis; D-glyceraldehyde 3-phosphate and glycerone phosphate from D-glucose: step 2/4. Functionally, catalyzes the reversible isomerization of glucose-6-phosphate to fructose-6-phosphate. This Klebsiella oxytoca protein is Glucose-6-phosphate isomerase.